A 495-amino-acid polypeptide reads, in one-letter code: Putative FAD-containing monooxygenase MymA (495 aa).

Residues serine 15, glutamate 36, tryptophan 45, 56-57 (DS), and valine 104 each bind FAD.

It belongs to the FAD-binding monooxygenase family. Requires FAD as cofactor.

Functionally, required for maintaining the appropriate mycolic acid composition and permeability of the envelope on its exposure to acidic pH. The polypeptide is Putative FAD-containing monooxygenase MymA (mymA) (Mycobacterium tuberculosis (strain CDC 1551 / Oshkosh)).